Here is an 88-residue protein sequence, read N- to C-terminus: Molybdopterin synthase sulfur carrier subunit (88 aa).

Residue G88 is modified to 1-thioglycine; alternate. A Glycyl adenylate; alternate modification is found at G88.

Belongs to the MoaD family. MOCS2A subfamily. In terms of assembly, heterotetramer; composed of 2 small (MOCS2A) and 2 large (MOCS2B) subunits. C-terminal thiocarboxylation occurs in 2 steps, it is first acyl-adenylated (-COAMP) via the hesA/moeB/thiF part of MOCS3, then thiocarboxylated (-COSH) via the rhodanese domain of MOCS3. Widely expressed. Highest levels are found in heart and skeletal muscle. Lower levels are present in brain, kidney and pancreas. Very low levels are found in lung and peripheral blood leukocytes.

It is found in the cytoplasm. Its subcellular location is the cytosol. It participates in cofactor biosynthesis; molybdopterin biosynthesis. In terms of biological role, acts as a sulfur carrier required for molybdopterin biosynthesis. Component of the molybdopterin synthase complex that catalyzes the conversion of precursor Z into molybdopterin by mediating the incorporation of 2 sulfur atoms into precursor Z to generate a dithiolene group. In the complex, serves as sulfur donor by being thiocarboxylated (-COSH) at its C-terminus by MOCS3. After interaction with MOCS2B, the sulfur is then transferred to precursor Z to form molybdopterin. The polypeptide is Molybdopterin synthase sulfur carrier subunit (Homo sapiens (Human)).